A 932-amino-acid chain; its full sequence is Beta-mannosidase A (932 aa).

A signal peptide spans 1-19 (MRVPAQATIAVLASAVSSP). N-linked (GlcNAc...) asparagine glycosylation is found at N41, N81, N94, N249, N261, N284, N289, N318, and N348. E480 serves as the catalytic Proton donor. N-linked (GlcNAc...) asparagine glycosylation is found at N538, N551, N609, N624, N632, N659, N739, and N791.

It belongs to the glycosyl hydrolase 2 family. Beta-mannosidase A subfamily. In terms of assembly, homodimer.

It is found in the secreted. It carries out the reaction Hydrolysis of terminal, non-reducing beta-D-mannose residues in beta-D-mannosides.. It participates in glycan metabolism; N-glycan degradation. Its function is as follows. Exoglycosidase that cleaves the single beta-linked mannose residue from the non-reducing end of beta-mannosidic oligosaccharides of various complexity and length. Involved in the degradation of polymeric mannan and galactomannan. The chain is Beta-mannosidase A (mndA) from Aspergillus terreus (strain NIH 2624 / FGSC A1156).